Reading from the N-terminus, the 326-residue chain is Glycine N(alpha)-acyltransferase (326 aa).

It belongs to the acetyltransferase family.

The catalysed reaction is a (3R)-hydroxyacyl-[ACP] + glycine = a lyso-glycine lipid + holo-[ACP] + H(+). It carries out the reaction (3R)-hydroxyhexadecanoyl-[ACP] + glycine = N-[(3R)-3-hydroxyhexadecanoyl]-glycine + holo-[ACP] + H(+). It functions in the pathway lipid metabolism. Is involved in the production of glycine lipids (GL), which are phosphorus-free membrane lipids. Catalyzes the first step of GL biosynthesis, i.e. the N-acylation of glycine via addition of a 3-hydroxy fatty acyl group, to form a range of monoacylated glycine (also named lyso-glycine lipids or lyso-GL). As an example, catalyzes the production of commendamide, an N-acylated (3-OH C16:0) derivative of glycine with hemolytic activity and the ability to solubilize cholesterol micelles; this compound can also activate NF-kB through the G-protein coupled receptor GPCR G2A/132. The sequence is that of Glycine N(alpha)-acyltransferase from Phocaeicola vulgatus (strain ATCC 8482 / DSM 1447 / JCM 5826 / CCUG 4940 / NBRC 14291 / NCTC 11154) (Bacteroides vulgatus).